The chain runs to 78 residues: Small ribosomal subunit protein bS20 (78 aa).

Residues 1 to 34 (MANIKSNLKRNKQNRARHTVVHSQTSAVKTQIKK) form a disordered region. The span at 7–20 (NLKRNKQNRARHTV) shows a compositional bias: basic residues. Residues 21 to 34 (VHSQTSAVKTQIKK) show a composition bias toward polar residues.

It belongs to the bacterial ribosomal protein bS20 family.

In terms of biological role, binds directly to 16S ribosomal RNA. The protein is Small ribosomal subunit protein bS20 of Malacoplasma penetrans (strain HF-2) (Mycoplasma penetrans).